Here is a 290-residue protein sequence, read N- to C-terminus: Thymidylate synthase (290 aa).

A dUMP-binding site is contributed by R31. H61 lines the (6R)-5,10-methylene-5,6,7,8-tetrahydrofolate pocket. Residue 152–153 coordinates dUMP; that stretch reads RR. The active-site Nucleophile is the C172. DUMP is bound by residues 192-195, N203, and 233-235; these read RSAD and HIY. D195 is a binding site for (6R)-5,10-methylene-5,6,7,8-tetrahydrofolate. Residue A289 participates in (6R)-5,10-methylene-5,6,7,8-tetrahydrofolate binding.

It belongs to the thymidylate synthase family. Bacterial-type ThyA subfamily. Homodimer.

The protein localises to the cytoplasm. The catalysed reaction is dUMP + (6R)-5,10-methylene-5,6,7,8-tetrahydrofolate = 7,8-dihydrofolate + dTMP. The protein operates within pyrimidine metabolism; dTTP biosynthesis. Its function is as follows. Catalyzes the reductive methylation of 2'-deoxyuridine-5'-monophosphate (dUMP) to 2'-deoxythymidine-5'-monophosphate (dTMP) while utilizing 5,10-methylenetetrahydrofolate (mTHF) as the methyl donor and reductant in the reaction, yielding dihydrofolate (DHF) as a by-product. This enzymatic reaction provides an intracellular de novo source of dTMP, an essential precursor for DNA biosynthesis. The sequence is that of Thymidylate synthase from Psychrobacter cryohalolentis (strain ATCC BAA-1226 / DSM 17306 / VKM B-2378 / K5).